The following is a 471-amino-acid chain: Casein kinase 1-like protein 9 (471 aa).

Residues 9 to 278 (FKLGRKIGSG…LKRLFRDLFI (270 aa)) enclose the Protein kinase domain. Residues 15-23 (IGSGSFGEL) and K38 contribute to the ATP site. D128 acts as the Proton acceptor in catalysis. Positions 300-471 (SSSGSSSRTR…RSLELLTLRK (172 aa)) are disordered. Over residues 325–339 (EKQERIAGKETRENR) the composition is skewed to basic and acidic residues. The segment covering 385–430 (SSRYGSSSRRAIPSSSRPSSAGGPSDSRSSSRLVTSTGGVGTVSNR) has biased composition (low complexity). Positions 431 to 449 (ASTSQRIQAGNESRTSSFS) are enriched in polar residues. Residues 454-464 (NTREDPLRRSL) are compositionally biased toward basic and acidic residues.

This sequence belongs to the protein kinase superfamily. CK1 Ser/Thr protein kinase family. Casein kinase I subfamily. As to quaternary structure, monomer. In terms of processing, autophosphorylated on serine, threonine and tyrosine residues. As to expression, expressed in leaves, stems and flowers.

The protein localises to the cytoplasm. The protein resides in the nucleus. It catalyses the reaction L-seryl-[protein] + ATP = O-phospho-L-seryl-[protein] + ADP + H(+). The catalysed reaction is L-threonyl-[protein] + ATP = O-phospho-L-threonyl-[protein] + ADP + H(+). Functionally, casein kinases are operationally defined by their preferential utilization of acidic proteins such as caseins as substrates. Can phosphorylate casein on serine and threonine residues, and poly(Glu,Tyr) in vitro. In Arabidopsis thaliana (Mouse-ear cress), this protein is Casein kinase 1-like protein 9.